The sequence spans 361 residues: Cilia- and flagella-associated protein 263 (361 aa).

It belongs to the CFAP263 family. As to quaternary structure, forms a complex with CFAP184; the interaction is required for functional activity in cilia.

Its subcellular location is the cell projection. The protein resides in the cilium. Functionally, in complex with CFAP263, acts as a regulator of ciliary beating that connects radial spoke 3 (RS3) to the inner dynein arm (IDA) and the nexin-dynein regulatory complex (N-DRC). The complex is positioned parallel to N-DRC and forms a connection between the arch at the base of RS3, the IDA tail and N-DRC. The chain is Cilia- and flagella-associated protein 263 (CFAP263) from Tetrahymena thermophila (strain SB210).